The primary structure comprises 125 residues: Casein kinase I isoform alpha (125 aa).

The 125-residue stretch at 1–125 (GEEVAVKLES…LIDFGLAKKY (125 aa)) folds into the Protein kinase domain. Lysine 7 is an ATP binding site. Aspartate 97 (proton acceptor) is an active-site residue.

It belongs to the protein kinase superfamily. CK1 Ser/Thr protein kinase family. Casein kinase I subfamily. Interacts with the Axin complex. Interacts with TUT1, leading to TUT1 phosphorylation. Interacts with FAM83A, FAM83B, FAM83C, FAM83D, FAM83E, FAM83F, FAM83G and FAM83H (via DUF1669). Interaction with FAM83H recruits CSNK1A1 to keratin filaments. Phosphorylated by MTOR in response to mitogenic stimulation, leading to its activation.

It is found in the cytoplasm. The protein localises to the cytoskeleton. The protein resides in the microtubule organizing center. Its subcellular location is the centrosome. It localises to the chromosome. It is found in the centromere. The protein localises to the kinetochore. The protein resides in the nucleus speckle. Its subcellular location is the cilium basal body. It localises to the spindle. It carries out the reaction L-seryl-[protein] + ATP = O-phospho-L-seryl-[protein] + ADP + H(+). It catalyses the reaction L-threonyl-[protein] + ATP = O-phospho-L-threonyl-[protein] + ADP + H(+). In terms of biological role, casein kinases are operationally defined by their preferential utilization of acidic proteins such as caseins as substrates. It can phosphorylate a large number of proteins. Participates in Wnt signaling. Phosphorylates CTNNB1 at 'Ser-45'. May phosphorylate PER1 and PER2. May play a role in segregating chromosomes during mitosis. May play a role in keratin cytoskeleton disassembly and thereby, it may regulate epithelial cell migration. Acts as a positive regulator of mTORC1 and mTORC2 signaling in response to nutrients by mediating phosphorylation of DEPTOR inhibitor. Acts as an inhibitor of NLRP3 inflammasome assembly by mediating phosphorylation of NLRP3. The polypeptide is Casein kinase I isoform alpha (CSNK1A1) (Sus scrofa (Pig)).